The primary structure comprises 265 residues: Mlc titration factor A (265 aa).

His111, His148, His152, and Glu211 together coordinate Zn(2+).

The protein belongs to the MtfA family. As to quaternary structure, interacts with Mlc. The cofactor is Zn(2+).

The protein localises to the cytoplasm. Its function is as follows. Involved in the modulation of the activity of the glucose-phosphotransferase system (glucose-PTS). Interacts with the transcriptional repressor Mlc, preventing its interaction with DNA and leading to the modulation of expression of genes regulated by Mlc, including ptsG, which encodes the PTS system glucose-specific EIICB component. Shows zinc-dependent metallopeptidase activity. The sequence is that of Mlc titration factor A from Salmonella choleraesuis (strain SC-B67).